A 416-amino-acid polypeptide reads, in one-letter code: Squamosa promoter-binding-like protein 8 (416 aa).

The interval 11–53 (SSCDDFGYNATPPPPPSLLPIMDQDGGGGSIQRDHHHHHNHQQ) is disordered. The SBP-type zinc-finger motif lies at 182–260 (PPRCQAEGCK…ADHNRRRRKS (79 aa)). Zn(2+)-binding residues include cysteine 185, cysteine 190, cysteine 207, histidine 210, cysteine 227, cysteine 230, histidine 234, and cysteine 246. The Bipartite nuclear localization signal motif lies at 243 to 259 (KKSCRKRLADHNRRRRK). Residues 250-299 (LADHNRRRRKSKPSDGEHSGEKRRAQANKSAATKDKAGSSSKNAGIGDGF) are disordered. A compositionally biased stretch (basic and acidic residues) spans 261 to 273 (KPSDGEHSGEKRR).

In terms of tissue distribution, expressed in stems, leaf sheaths, and young panicles.

The protein localises to the nucleus. Probable transcription factor that plays an important role in building the laminar joint between leaf blade and leaf sheath boundary, thereby controlling ligule and auricle development. The chain is Squamosa promoter-binding-like protein 8 (SPL8) from Oryza sativa subsp. indica (Rice).